The primary structure comprises 180 residues: Nucleoside-triphosphatase THEP1 (180 aa).

Residues 18-25 (GRPGVGKT) and 104-111 (LVIMDEIG) contribute to the ATP site.

The protein belongs to the THEP1 NTPase family.

The catalysed reaction is a ribonucleoside 5'-triphosphate + H2O = a ribonucleoside 5'-diphosphate + phosphate + H(+). In terms of biological role, has nucleotide phosphatase activity towards ATP, GTP, CTP, TTP and UTP. May hydrolyze nucleoside diphosphates with lower efficiency. The chain is Nucleoside-triphosphatase THEP1 from Metallosphaera sedula (strain ATCC 51363 / DSM 5348 / JCM 9185 / NBRC 15509 / TH2).